The sequence spans 296 residues: Myeloid differentiation primary response protein MyD88 (296 aa).

The region spanning 54–109 is the Death domain; that stretch reads MGFEYLEIRELETRPDPTRSLLDAWQGRSGASVGRLLELLALLDREDILKELKSRI. Residues 110–155 form an intermediate domain region; that stretch reads EEDCQKYLGKQQNQESEKPLQVARVESSVPQTKELGGITTLDDPLG. Residues 159–293 enclose the TIR domain; that stretch reads ELFDAFICYC…WFWTRLAKAL (135 aa). Phosphoserine is present on S244.

In terms of assembly, homodimer. Also forms heterodimers with TIRAP. Binds to TLR2, TLR4, IRAK1, IRAK2 and IRAK4 via their respective TIR domains. Interacts with IL18R1. Interacts with BMX, IL1RL1, IKBKE and IRF7. Interacts with LRRFIP1 and LRRFIP2; this interaction positively regulates Toll-like receptor (TLR) signaling in response to agonist. Interacts with FLII. LRRFIP1 and LRRFIP2 compete with FLII for MYD88-binding. Interacts with IRF1. Upon IL1B treatment, forms a complex with PELI1, IRAK1, IRAK4 and TRAF6; this complex recruits MAP3K7/TAK1, TAB1 and TAB2 to mediate NF-kappa-B activation. Direct binding of SMAD6 to PELI1 prevents the complex formation and hence negatively regulates IL1R-TLR signaling and eventually NF-kappa-B-mediated gene expression. May interact with PIK3AP1. Interacts (via TIR domain) with DHX9 (via H2A and OB-fold regions); this interaction is direct. Interacts with OTUD4 deubiquitinase; the interaction is direct. In terms of processing, ubiquitinated; undergoes 'Lys-63'-linked polyubiquitination. OTUD4 specifically hydrolyzes 'Lys-63'-linked polyubiquitinated MYD88. Deubiquitinated by USP3 that cleaves 'Lys-63'-linked ubiquitin chains leading to inhibition of MYD88-induced NF-kappa-B signaling. Detected in bone marrow. Isoform 1 is expressed in testis, kidney, lung, ovary, adrenal gland, provstate, thymus and heart, and weakly in skeletal muscle, liver, spleen and brain. Isoform 2 is mainly expressed in the spleen and weakly in brain.

The protein localises to the cytoplasm. It is found in the nucleus. Its function is as follows. Adapter protein involved in the Toll-like receptor and IL-1 receptor signaling pathway in the innate immune response. Acts via IRAK1, IRAK2, IRF7 and TRAF6, leading to NF-kappa-B activation, cytokine secretion and the inflammatory response. Increases IL-8 transcription. Involved in IL-18-mediated signaling pathway. Activates IRF1 resulting in its rapid migration into the nucleus to mediate an efficient induction of IFN-beta, NOS2/INOS, and IL12A genes. Upon TLR8 activation by GU-rich single-stranded RNA (GU-rich RNA) derived from viruses, induces IL1B release through NLRP3 inflammasome activation. MyD88-mediated signaling in intestinal epithelial cells is crucial for maintenance of gut homeostasis and controls the expression of the antimicrobial lectin REG3G in the small intestine. Mediates leukocyte recruitment at the inflammatory site. Functionally, defective in its ability to induce IRAK phosphorylation and NF-kappa-B activation and can function as a negative regulator of activation by IL-1 or lipopolysaccharide (LPS). This chain is Myeloid differentiation primary response protein MyD88, found in Mus musculus (Mouse).